Here is an 823-residue protein sequence, read N- to C-terminus: Molybdenum cofactor sulfurase (823 aa).

The residue at position 228 (Lys-228) is an N6-(pyridoxal phosphate)lysine. Cys-392 is a catalytic residue. The segment at 628 to 667 (SSTRLAEPRRGLGSRKSPLRPAMPGAFPQDTPTPEAERNP) is disordered. One can recognise an MOSC domain in the interval 644–819 (SPLRPAMPGA…VMVGDVVTPS (176 aa)).

The protein belongs to the class-V pyridoxal-phosphate-dependent aminotransferase family. MOCOS subfamily. The cofactor is pyridoxal 5'-phosphate.

It catalyses the reaction Mo-molybdopterin + L-cysteine + AH2 = thio-Mo-molybdopterin + L-alanine + A + H2O. It functions in the pathway cofactor biosynthesis; molybdopterin biosynthesis. In terms of biological role, sulfurates the molybdenum cofactor. Sulfation of molybdenum is essential for xanthine dehydrogenase (XDH) and aldehyde oxidase (ADO) enzymes in which molybdenum cofactor is liganded by 1 oxygen and 1 sulfur atom in active form. This chain is Molybdenum cofactor sulfurase, found in Aspergillus niger (strain ATCC MYA-4892 / CBS 513.88 / FGSC A1513).